Reading from the N-terminus, the 299-residue chain is 4-diphosphocytidyl-2-C-methyl-D-erythritol kinase (299 aa).

K18 is a catalytic residue. 104–114 is a binding site for ATP; that stretch reads PIASGIGGGSS. The active site involves D146.

It belongs to the GHMP kinase family. IspE subfamily.

It catalyses the reaction 4-CDP-2-C-methyl-D-erythritol + ATP = 4-CDP-2-C-methyl-D-erythritol 2-phosphate + ADP + H(+). It functions in the pathway isoprenoid biosynthesis; isopentenyl diphosphate biosynthesis via DXP pathway; isopentenyl diphosphate from 1-deoxy-D-xylulose 5-phosphate: step 3/6. In terms of biological role, catalyzes the phosphorylation of the position 2 hydroxy group of 4-diphosphocytidyl-2C-methyl-D-erythritol. The sequence is that of 4-diphosphocytidyl-2-C-methyl-D-erythritol kinase from Brucella abortus biovar 1 (strain 9-941).